Consider the following 223-residue polypeptide: Deoxyribose-phosphate aldolase (223 aa).

Asp-89 functions as the Proton donor/acceptor in the catalytic mechanism. Lys-152 (schiff-base intermediate with acetaldehyde) is an active-site residue. The Proton donor/acceptor role is filled by Lys-181.

This sequence belongs to the DeoC/FbaB aldolase family. DeoC type 1 subfamily.

The protein resides in the cytoplasm. The catalysed reaction is 2-deoxy-D-ribose 5-phosphate = D-glyceraldehyde 3-phosphate + acetaldehyde. It functions in the pathway carbohydrate degradation; 2-deoxy-D-ribose 1-phosphate degradation; D-glyceraldehyde 3-phosphate and acetaldehyde from 2-deoxy-alpha-D-ribose 1-phosphate: step 2/2. Its function is as follows. Catalyzes a reversible aldol reaction between acetaldehyde and D-glyceraldehyde 3-phosphate to generate 2-deoxy-D-ribose 5-phosphate. In Bacillus subtilis (strain 168), this protein is Deoxyribose-phosphate aldolase.